The primary structure comprises 196 residues: Imidazole glycerol phosphate synthase subunit HisH (196 aa).

The Glutamine amidotransferase type-1 domain maps to 2–196 (KATLINYGVG…LRNFYSWVKR (195 aa)). The active-site Nucleophile is cysteine 76. Active-site residues include histidine 175 and glutamate 177.

As to quaternary structure, heterodimer of HisH and HisF.

The protein localises to the cytoplasm. The enzyme catalyses 5-[(5-phospho-1-deoxy-D-ribulos-1-ylimino)methylamino]-1-(5-phospho-beta-D-ribosyl)imidazole-4-carboxamide + L-glutamine = D-erythro-1-(imidazol-4-yl)glycerol 3-phosphate + 5-amino-1-(5-phospho-beta-D-ribosyl)imidazole-4-carboxamide + L-glutamate + H(+). The catalysed reaction is L-glutamine + H2O = L-glutamate + NH4(+). It functions in the pathway amino-acid biosynthesis; L-histidine biosynthesis; L-histidine from 5-phospho-alpha-D-ribose 1-diphosphate: step 5/9. In terms of biological role, IGPS catalyzes the conversion of PRFAR and glutamine to IGP, AICAR and glutamate. The HisH subunit catalyzes the hydrolysis of glutamine to glutamate and ammonia as part of the synthesis of IGP and AICAR. The resulting ammonia molecule is channeled to the active site of HisF. This Sulfurisphaera tokodaii (strain DSM 16993 / JCM 10545 / NBRC 100140 / 7) (Sulfolobus tokodaii) protein is Imidazole glycerol phosphate synthase subunit HisH.